A 484-amino-acid chain; its full sequence is mRNA decay activator protein ZFP36L2 (484 aa).

2 positions are modified to phosphoserine: Ser-57 and Ser-127. The segment at 100–152 (YGQLKEPSGGSGTALVTKESKFRDRSFSENGERSQHLLHLQQQQKGGSGSQIN) is disordered. Residues 117-134 (KESKFRDRSFSENGERSQ) are compositionally biased toward basic and acidic residues. Residues 155–160 (RYKTEL) carry the RNA-binding motif. C3H1-type zinc fingers lie at residues 155-183 (RYKT…HGFH) and 193-221 (KYKT…HNAD). An RNA-binding region spans residues 172-213 (YGEKCQFAHGFHELRSLTRHPKYKTELCRTFHTIGFCPYGPR). Disordered regions lie at residues 261 to 304 (SLSF…SCSS) and 395 to 484 (QQGL…ISDD). A compositionally biased stretch (pro residues) spans 401 to 418 (PAPPPAQPPAAPAPPSPP). The segment covering 449-468 (YLSGSLSSGSLSGSESPSLD) has biased composition (low complexity). Ser-480 and Ser-482 each carry phosphoserine; by RPS6KA1.

In terms of assembly, associates with the cytoplasmic CCR4-NOT deadenylase to trigger ARE-containing mRNA deadenylation and decay processes. Interacts with CNOT7; this interaction is inhibited in response to phorbol 12-myristate 13-acetate (PMA) treatment in a p38 MAPK-dependent manner. Interacts with CNOT6L. Phosphorylated by RPS6KA1 at Ser-480 and Ser-482 upon phorbol 12-myristate 13-acetate (PMA) treatment; this phosphorylation results in dissociation of the CCR4-NOT-deadenylase complex and induces p38 MAPK-mediated stabilization of the low-density lipoprotein (LDL) receptor (LDLR) mRNA. Phosphorylation occurs during early preadipocyte differentiation. Expressed in preadipocytes and adipocytes (at protein level). Expressed at highest level in lymphoid tissues such as thymus, spleen, lung, uterus, ovary, small and large intestine, mammary gland, fat and bone marrow. Expressed at intermediate level in kidney, heart, adrenal, eye and fetal liver. Weakly expressed in brain, skeletal muscle and liver. Expressed through B lymphocyte development. Expressed in superior cervical ganglion (SCG) and dorsal root ganglion (DRG). Expressed in embryonic stem cells (ESCs). Expressed in oocytes.

Its subcellular location is the nucleus. It localises to the cytoplasm. Functionally, zinc-finger RNA-binding protein that destabilizes several cytoplasmic AU-rich element (ARE)-containing mRNA transcripts by promoting their poly(A) tail removal or deadenylation, and hence provide a mechanism for attenuating protein synthesis. Acts as a 3'-untranslated region (UTR) ARE mRNA-binding adapter protein to communicate signaling events to the mRNA decay machinery. Functions by recruiting the CCR4-NOT deadenylase complex and probably other components of the cytoplasmic RNA decay machinery to the bound ARE-containing mRNAs, and hence promotes ARE-mediated mRNA deadenylation and decay processes. Binds to 3'-UTR ARE of numerous mRNAs. Promotes ARE-containing mRNA decay of the low-density lipoprotein (LDL) receptor (LDLR) mRNA in response to phorbol 12-myristate 13-acetate (PMA) treatment in a p38 MAPK-dependent manner. Positively regulates early adipogenesis by promoting ARE-mediated mRNA decay of immediate early genes (IEGs). Plays a role in mature peripheral neuron integrity by promoting ARE-containing mRNA decay of the transcriptional repressor REST mRNA. Plays a role in ovulation and oocyte meiotic maturation by promoting ARE-mediated mRNA decay of the luteinizing hormone receptor LHCGR mRNA. Acts as a negative regulator of erythroid cell differentiation: promotes glucocorticoid-induced self-renewal of erythroid cells by binding mRNAs that are induced or highly expressed during terminal erythroid differentiation and promotes their degradation, preventing erythroid cell differentiation. In association with ZFP36L1 maintains quiescence on developing B lymphocytes by promoting ARE-mediated decay of several mRNAs encoding cell cycle regulators that help B cells progress through the cell cycle, and hence ensuring accurate variable-diversity-joining (VDJ) recombination process and functional immune cell formation. Together with ZFP36L1 is also necessary for thymocyte development and prevention of T-cell acute lymphoblastic leukemia (T-ALL) transformation by promoting ARE-mediated mRNA decay of the oncogenic transcription factor NOTCH1 mRNA. The protein is mRNA decay activator protein ZFP36L2 of Mus musculus (Mouse).